The chain runs to 883 residues: DNA topoisomerase 1 (883 aa).

The region spanning 2-126 is the Toprim domain; it reads PKLVIVESPT…TKRMVFHEIT (125 aa). Residues Glu-8 and Asp-95 each coordinate Mg(2+). The 443-residue stretch at 141–583 folds into the Topo IA-type catalytic domain; it reads DQRLVHAQET…QFYRGDRGLE (443 aa). Residues 175–180 are interaction with DNA; that stretch reads SAGRVQ. Residues 271-294 form a disordered region; sequence SLEEKPTTRKPAPPFTTSTLQQES. Tyr-320 functions as the O-(5'-phospho-DNA)-tyrosine intermediate in the catalytic mechanism. Residues 842-883 are disordered; that stretch reads AKAGQAKAKGGRRSTGTPKSGETKARTTKTTKKTTTRRTTSR. A compositionally biased stretch (basic residues) spans 867-883; it reads RTTKTTKKTTTRRTTSR.

The protein belongs to the type IA topoisomerase family. Monomer. It depends on Mg(2+) as a cofactor.

The enzyme catalyses ATP-independent breakage of single-stranded DNA, followed by passage and rejoining.. In terms of biological role, releases the supercoiling and torsional tension of DNA, which is introduced during the DNA replication and transcription, by transiently cleaving and rejoining one strand of the DNA duplex. Introduces a single-strand break via transesterification at a target site in duplex DNA. The scissile phosphodiester is attacked by the catalytic tyrosine of the enzyme, resulting in the formation of a DNA-(5'-phosphotyrosyl)-enzyme intermediate and the expulsion of a 3'-OH DNA strand. The free DNA strand then undergoes passage around the unbroken strand, thus removing DNA supercoils. Finally, in the religation step, the DNA 3'-OH attacks the covalent intermediate to expel the active-site tyrosine and restore the DNA phosphodiester backbone. This chain is DNA topoisomerase 1, found in Synechococcus elongatus (strain ATCC 33912 / PCC 7942 / FACHB-805) (Anacystis nidulans R2).